The following is a 116-amino-acid chain: Putative pterin-4-alpha-carbinolamine dehydratase (116 aa).

This sequence belongs to the pterin-4-alpha-carbinolamine dehydratase family.

The enzyme catalyses (4aS,6R)-4a-hydroxy-L-erythro-5,6,7,8-tetrahydrobiopterin = (6R)-L-erythro-6,7-dihydrobiopterin + H2O. This Paracidovorax citrulli (strain AAC00-1) (Acidovorax citrulli) protein is Putative pterin-4-alpha-carbinolamine dehydratase.